The sequence spans 502 residues: Glycerol kinase (502 aa).

ADP is bound at residue T14. ATP is bound by residues T14, T15, and S16. T14 lines the sn-glycerol 3-phosphate pocket. R18 is a binding site for ADP. Positions 84, 85, 136, and 246 each coordinate sn-glycerol 3-phosphate. Glycerol-binding residues include R84, E85, Y136, D246, and Q247. The ADP site is built by T268 and G311. The ATP site is built by T268, G311, Q315, and G412. The ADP site is built by G412 and N416.

Belongs to the FGGY kinase family. In terms of assembly, homotetramer and homodimer (in equilibrium). Heterodimer with EIIA-Glc. Binds 1 zinc ion per glycerol kinase EIIA-Glc dimer. The zinc ion is important for dimerization.

The enzyme catalyses glycerol + ATP = sn-glycerol 3-phosphate + ADP + H(+). It participates in polyol metabolism; glycerol degradation via glycerol kinase pathway; sn-glycerol 3-phosphate from glycerol: step 1/1. Its activity is regulated as follows. Activity of this regulatory enzyme is affected by several metabolites. Allosterically and non-competitively inhibited by fructose 1,6-bisphosphate (FBP) and unphosphorylated phosphocarrier protein EIIA-Glc (III-Glc), an integral component of the bacterial phosphotransferase (PTS) system. Functionally, key enzyme in the regulation of glycerol uptake and metabolism. Catalyzes the phosphorylation of glycerol to yield sn-glycerol 3-phosphate. The protein is Glycerol kinase of Salmonella agona (strain SL483).